Reading from the N-terminus, the 392-residue chain is Galactokinase (392 aa).

40–43 (EHID) serves as a coordination point for substrate. Residues S74 and 128–134 (GSGLSSS) contribute to the ATP site. Residues S134 and E167 each contribute to the Mg(2+) site. D179 serves as the catalytic Proton acceptor. Y229 serves as a coordination point for substrate.

Belongs to the GHMP kinase family. GalK subfamily.

The protein resides in the cytoplasm. It catalyses the reaction alpha-D-galactose + ATP = alpha-D-galactose 1-phosphate + ADP + H(+). Its pathway is carbohydrate metabolism; galactose metabolism. In terms of biological role, catalyzes the transfer of the gamma-phosphate of ATP to D-galactose to form alpha-D-galactose-1-phosphate (Gal-1-P). This Clostridium tetani (strain Massachusetts / E88) protein is Galactokinase.